The following is a 109-amino-acid chain: Iron-sulfur assembly protein IscA-like 3, mitochondrial (109 aa).

The N-terminal 18 residues, 1–18 (MRKQVLALSDTAAARIRQ), are a transit peptide targeting the mitochondrion. 3 residues coordinate Fe cation: cysteine 37, cysteine 100, and cysteine 102.

It belongs to the HesB/IscA family. In terms of assembly, homodimer; may form tetramers and higher multimers. Fe cation serves as cofactor.

It localises to the mitochondrion. Functionally, involved in the assembly of mitochondrial iron-sulfur proteins. Probably involved in the binding of an intermediate of Fe/S cluster assembly. This chain is Iron-sulfur assembly protein IscA-like 3, mitochondrial, found in Arabidopsis thaliana (Mouse-ear cress).